The chain runs to 361 residues: Hydroxyproline O-arabinosyltransferase PLENTY (361 aa).

Residues Leu-13–Ile-33 traverse the membrane as a helical; Signal-anchor segment.

Its subcellular location is the golgi apparatus membrane. The catalysed reaction is trans-4-hydroxy-L-prolyl-[protein] + UDP-beta-L-arabinofuranose = O-(beta-L-arabinofuranosyl)-trans-4-hydroxy-L-prolyl-[protein] + UDP + H(+). Its function is as follows. Glycosyltransferase involved in the O-arabinosylation of several proteins including extensins and small signaling peptides. Catalyzes the transfer of the initial L-arabinose to the hydroxyl group of Hyp residues. Probably involved in the arabinosylation of CLAVATA3/ESR-related (CLE) signaling peptides that move from root to shoot, to interact with receptor kinase signaling that regulates nodulation. Involved in long distance nodulation signaling events. Involved in the autoregulation of nodulation (AON), a long distance systemic signaling from root to shoot and back again, which allows legumes to limit the number of root nodules formed based on available nitrogen and previous rhizobial colonization. The polypeptide is Hydroxyproline O-arabinosyltransferase PLENTY (Lotus japonicus (Lotus corniculatus var. japonicus)).